The primary structure comprises 1366 residues: ABC multidrug transporter MDR2 (1366 aa).

Residues 52–72 (IALIVIGTIAGIGAGIPFPLL) form a helical membrane-spanning segment. In terms of domain architecture, ABC transmembrane type-1 1 spans 56–354 (VIGTIAGIGA…MAPFMHIFAS (299 aa)). N-linked (GlcNAc...) asparagine glycosylation occurs at asparagine 84. A run of 5 helical transmembrane segments spans residues 106–126 (VLQVIYASILNFVCMYIHTGC), 180–200 (KVGLFIGTISYFVAAYIVAFL), 202–222 (VATIAAMLMSVVPIYFLMAFG), 288–308 (IQFGMLYFVAYASNALAFWQG), and 323–343 (VSVGAVYTVIFVLLDASFVLS). One can recognise an ABC transporter 1 domain in the interval 390–669 (IELQDVTFNY…DGVYAGMVRL (280 aa)). ATP is bound at residue 425-432 (GTSGSGKS). N-linked (GlcNAc...) asparagine glycosylation is present at asparagine 620. The tract at residues 727–746 (PEEADSLPTEPEAKKEKPKQ) is disordered. 4 helical membrane-spanning segments follow: residues 768-788 (LGLITSIMIGVSYTGEAVIFG), 807-827 (GMLFGLLFFILAVAKFAAVIV), 868-888 (LLVALVTSDASALSSLTGTTI), and 898-918 (LFAGVILSHVIAWKIAVVLLA). One can recognise an ABC transmembrane type-1 2 domain in the interval 768–1055 (LGLITSIMIG…MFALVPDISK (288 aa)). The N-linked (GlcNAc...) asparagine glycan is linked to asparagine 976. The next 2 helical transmembrane spans lie at 995 to 1015 (FWLSLAYSISTLVYALAYWWG) and 1019 to 1039 (ILAGMYTQVQFFIVLPALLFS). An ABC transporter 2 domain is found at 1122–1361 (VQFRNVHFRY…CESYRANVIH (240 aa)). ATP is bound at residue 1157–1164 (GPSGSGKS).

The protein belongs to the ABC transporter superfamily. ABCB family. Multidrug resistance exporter (TC 3.A.1.201) subfamily.

It is found in the cell membrane. Functionally, pleiotropic ABC efflux transporter that may be involved in the modulation susceptibility to a wide range of unrelated cytotoxic compounds. Does not act as an efflux pump for azoles, including fluconazole, itraconazole, ketoconazole, miconazole and voriconazole, nor does it modulate susceptibility to cycloheximide. This chain is ABC multidrug transporter MDR2, found in Trichophyton rubrum (strain ATCC MYA-4607 / CBS 118892) (Athlete's foot fungus).